The sequence spans 161 residues: Xanthine-guanine phosphoribosyltransferase (161 aa).

Residues Arg41–Gly42 and Asp95–Thr103 contribute to the 5-phospho-alpha-D-ribose 1-diphosphate site. Residue Asp96 coordinates Mg(2+). Guanine-binding residues include Asp99 and Ile142. Xanthine-binding residues include Asp99 and Ile142. GMP contacts are provided by residues Asp99 to Thr103 and Trp141 to Ile142.

It belongs to the purine/pyrimidine phosphoribosyltransferase family. XGPT subfamily. Homotetramer. The cofactor is Mg(2+).

It is found in the cell inner membrane. The catalysed reaction is GMP + diphosphate = guanine + 5-phospho-alpha-D-ribose 1-diphosphate. It catalyses the reaction XMP + diphosphate = xanthine + 5-phospho-alpha-D-ribose 1-diphosphate. The enzyme catalyses IMP + diphosphate = hypoxanthine + 5-phospho-alpha-D-ribose 1-diphosphate. Its pathway is purine metabolism; GMP biosynthesis via salvage pathway; GMP from guanine: step 1/1. The protein operates within purine metabolism; XMP biosynthesis via salvage pathway; XMP from xanthine: step 1/1. In terms of biological role, purine salvage pathway enzyme that catalyzes the transfer of the ribosyl-5-phosphate group from 5-phospho-alpha-D-ribose 1-diphosphate (PRPP) to the N9 position of the 6-oxopurines guanine and xanthine to form the corresponding ribonucleotides GMP (guanosine 5'-monophosphate) and XMP (xanthosine 5'-monophosphate), with the release of PPi. To a lesser extent, also acts on hypoxanthine. The protein is Xanthine-guanine phosphoribosyltransferase of Idiomarina loihiensis (strain ATCC BAA-735 / DSM 15497 / L2-TR).